A 196-amino-acid chain; its full sequence is Endoribonuclease YbeY (196 aa).

Residues histidine 120, histidine 124, and histidine 130 each contribute to the Zn(2+) site.

The protein belongs to the endoribonuclease YbeY family. The cofactor is Zn(2+).

The protein localises to the cytoplasm. Its function is as follows. Single strand-specific metallo-endoribonuclease involved in late-stage 70S ribosome quality control and in maturation of the 3' terminus of the 16S rRNA. The sequence is that of Endoribonuclease YbeY from Corynebacterium glutamicum (strain ATCC 13032 / DSM 20300 / JCM 1318 / BCRC 11384 / CCUG 27702 / LMG 3730 / NBRC 12168 / NCIMB 10025 / NRRL B-2784 / 534).